The chain runs to 55 residues: Large ribosomal subunit protein bL33 (55 aa).

Belongs to the bacterial ribosomal protein bL33 family.

The polypeptide is Large ribosomal subunit protein bL33 (Kocuria rhizophila (strain ATCC 9341 / DSM 348 / NBRC 103217 / DC2201)).